The chain runs to 192 residues: Large ribosomal subunit protein uL5 (192 aa).

This sequence belongs to the universal ribosomal protein uL5 family. Part of the 50S ribosomal subunit; part of the 5S rRNA/L5/L18/L25 subcomplex. Contacts the 5S rRNA and the P site tRNA. Forms a bridge to the 30S subunit in the 70S ribosome.

This is one of the proteins that bind and probably mediate the attachment of the 5S RNA into the large ribosomal subunit, where it forms part of the central protuberance. In the 70S ribosome it contacts protein S13 of the 30S subunit (bridge B1b), connecting the 2 subunits; this bridge is implicated in subunit movement. Contacts the P site tRNA; the 5S rRNA and some of its associated proteins might help stabilize positioning of ribosome-bound tRNAs. This Mesorhizobium japonicum (strain LMG 29417 / CECT 9101 / MAFF 303099) (Mesorhizobium loti (strain MAFF 303099)) protein is Large ribosomal subunit protein uL5.